The sequence spans 237 residues: Large ribosomal subunit protein uL2 (237 aa).

The span at 1–11 (MGKRLISQNRG) shows a compositional bias: polar residues. 2 disordered regions span residues 1 to 26 (MGKR…KRKG) and 204 to 237 (PYGG…SRRT). Composition is skewed to basic residues over residues 13 to 26 (GTPK…KRKG) and 228 to 237 (KVGHIASRRT).

Belongs to the universal ribosomal protein uL2 family. Part of the 50S ribosomal subunit. Forms a bridge to the 30S subunit in the 70S ribosome.

Functionally, one of the primary rRNA binding proteins. Required for association of the 30S and 50S subunits to form the 70S ribosome, for tRNA binding and peptide bond formation. It has been suggested to have peptidyltransferase activity; this is somewhat controversial. Makes several contacts with the 16S rRNA in the 70S ribosome. The chain is Large ribosomal subunit protein uL2 from Methanococcus vannielii.